The primary structure comprises 527 residues: GMP synthase [glutamine-hydrolyzing] (527 aa).

A Glutamine amidotransferase type-1 domain is found at 20–208; the sequence is SVVILDYGSQ…LFDVCGCAPT (189 aa). Cys97 functions as the Nucleophile in the catalytic mechanism. Catalysis depends on residues His182 and Glu184. One can recognise a GMPS ATP-PPase domain in the interval 209-402; sequence WTAESFVEQA…LGLPEEIVQR (194 aa). 236–242 is an ATP binding site; the sequence is SGGVDSS.

As to quaternary structure, homodimer.

The catalysed reaction is XMP + L-glutamine + ATP + H2O = GMP + L-glutamate + AMP + diphosphate + 2 H(+). Its pathway is purine metabolism; GMP biosynthesis; GMP from XMP (L-Gln route): step 1/1. Its function is as follows. Catalyzes the synthesis of GMP from XMP. The sequence is that of GMP synthase [glutamine-hydrolyzing] from Thermomicrobium roseum (strain ATCC 27502 / DSM 5159 / P-2).